Here is a 580-residue protein sequence, read N- to C-terminus: Probable glucomannan 4-beta-mannosyltransferase 2 (580 aa).

Positions 1–12 are enriched in polar residues; sequence MSTNGGAPSQKR. Positions 1 to 33 are disordered; that stretch reads MSTNGGAPSQKRSWLPSRPLLTTTTQTYPPPLL. A compositionally biased stretch (low complexity) spans 15-27; it reads LPSRPLLTTTTQT. A helical membrane pass occupies residues 85–105; the sequence is AVWACLAMSAMLVAEAAWMGL. Aspartate 182 is a catalytic residue. Substrate contacts are provided by aspartate 241 and aspartate 243. Aspartate 335 is an active-site residue. 4 helical membrane-spanning segments follow: residues 414–434, 437–457, 528–548, and 554–574; these read AIAP…SAMV, VTIP…MNAI, IYIP…YDFV, and YYIY…GFVG.

It belongs to the glycosyltransferase 2 family. Plant cellulose synthase-like A subfamily.

The protein resides in the golgi apparatus membrane. It carries out the reaction GDP-mannose + (glucomannan)n = GDP + (glucomannan)n+1.. In terms of biological role, probable mannan synthase which consists of a 4-beta-mannosyltransferase activity on mannan using GDP-mannose. The beta-1,4-mannan product is the backbone for galactomannan synthesis by galactomannan galactosyltransferase. Galactomannan is a noncellulosic polysaccharides of plant cell wall. The protein is Probable glucomannan 4-beta-mannosyltransferase 2 of Oryza sativa subsp. japonica (Rice).